We begin with the raw amino-acid sequence, 235 residues long: MNRLLNEKVEEFKKGVLKAGWFIEKMFRNSISSLVERNESLAREVIADEEVVDQMEVEIQEKAMEVLGLFSPIGKPLLTVTAGIRVAELIENIADKCHDIAKNVLELMEEPPLKPLEDIPAMANQTSEMLKFALRMFADVNVEKSFEVCRMDSKVDDLYEKVREELLLYMMESPKYVKRALLLLEIAGNIEIIADYATNIVEVSVYMVQGEAYKCYHDELLLFKKSGGVLFESSD.

Belongs to the PhoU family. In terms of assembly, homodimer.

It localises to the cytoplasm. Plays a role in the regulation of phosphate uptake. The chain is Phosphate-specific transport system accessory protein PhoU homolog 2 (phoU2) from Thermotoga maritima (strain ATCC 43589 / DSM 3109 / JCM 10099 / NBRC 100826 / MSB8).